A 313-amino-acid polypeptide reads, in one-letter code: Porphobilinogen deaminase (313 aa).

S-(dipyrrolylmethanemethyl)cysteine is present on Cys242.

This sequence belongs to the HMBS family. In terms of assembly, monomer. Dipyrromethane is required as a cofactor.

The catalysed reaction is 4 porphobilinogen + H2O = hydroxymethylbilane + 4 NH4(+). It participates in porphyrin-containing compound metabolism; protoporphyrin-IX biosynthesis; coproporphyrinogen-III from 5-aminolevulinate: step 2/4. Its function is as follows. Tetrapolymerization of the monopyrrole PBG into the hydroxymethylbilane pre-uroporphyrinogen in several discrete steps. The protein is Porphobilinogen deaminase of Pectobacterium atrosepticum (strain SCRI 1043 / ATCC BAA-672) (Erwinia carotovora subsp. atroseptica).